Here is a 311-residue protein sequence, read N- to C-terminus: Malate dehydrogenase (311 aa).

NAD(+) is bound by residues Gly-7–Gly-12 and Asp-32. Residues Arg-82 and Arg-88 each coordinate substrate. Residues Asn-95 and Val-118–Asn-120 contribute to the NAD(+) site. Positions 120 and 151 each coordinate substrate. The Proton acceptor role is filled by His-175.

It belongs to the LDH/MDH superfamily. MDH type 3 family. Homotetramer.

The enzyme catalyses (S)-malate + NAD(+) = oxaloacetate + NADH + H(+). Its activity is regulated as follows. Strongly inhibited by iodoacetic acid and CuCl(2). Completely inhibited by N-ethylmaleimide and HgCl(2). In terms of biological role, catalyzes the reversible oxidation of malate to oxaloacetate. Can use both NAD and NADP for malate oxidation, but NADPH cannot be used for oxaloacetate reduction. In Flavobacterium frigidimaris, this protein is Malate dehydrogenase.